Reading from the N-terminus, the 332-residue chain is UPF0194 membrane protein YbhG (332 aa).

The N-terminal stretch at M1–Y26 is a signal peptide. Residues E108–A209 adopt a coiled-coil conformation.

This sequence belongs to the UPF0194 family.

It localises to the periplasm. The protein is UPF0194 membrane protein YbhG (ybhG) of Shigella sonnei (strain Ss046).